A 90-amino-acid chain; its full sequence is Small ribosomal subunit protein bS16 (90 aa).

Belongs to the bacterial ribosomal protein bS16 family.

This is Small ribosomal subunit protein bS16 from Listeria monocytogenes serotype 4b (strain F2365).